A 35-amino-acid polypeptide reads, in one-letter code: Tau-theraphotoxin-Pc1b (35 aa).

Intrachain disulfides connect Cys3–Cys17, Cys10–Cys22, and Cys16–Cys29. Phe35 carries the phenylalanine amide modification.

Belongs to the neurotoxin 10 (Hwtx-1) family. 62 (Vatx) subfamily. Expressed by the venom gland.

The protein localises to the secreted. Selectively activates the mammalian capsaicin receptor TRPV1, a non-selective cation channel expressed by sensory neurons of the pain pathway. Is more potent than VaTx1, but less potent than VaTx3. Interacts with distinct regions of the channel than capsaicin, since it only acts on the extracellular face of the channel, and capsaicin binds to the cytosolic side. Also activates avian TRPV1, which is insensitive to capsaicin. Produce weak inhibition on potassium channels Kv2.1/KCNB1. The polypeptide is Tau-theraphotoxin-Pc1b (Psalmopoeus cambridgei (Trinidad chevron tarantula)).